The sequence spans 154 residues: Ribosomal RNA large subunit methyltransferase H (154 aa).

Gly102 is an S-adenosyl-L-methionine binding site.

It belongs to the RNA methyltransferase RlmH family. Homodimer.

The protein resides in the cytoplasm. The catalysed reaction is pseudouridine(1915) in 23S rRNA + S-adenosyl-L-methionine = N(3)-methylpseudouridine(1915) in 23S rRNA + S-adenosyl-L-homocysteine + H(+). Specifically methylates the pseudouridine at position 1915 (m3Psi1915) in 23S rRNA. The chain is Ribosomal RNA large subunit methyltransferase H from Caulobacter sp. (strain K31).